A 123-amino-acid polypeptide reads, in one-letter code: Large ribosomal subunit protein uL18 (123 aa).

Belongs to the universal ribosomal protein uL18 family. In terms of assembly, part of the 50S ribosomal subunit; part of the 5S rRNA/L5/L18/L25 subcomplex. Contacts the 5S and 23S rRNAs.

This is one of the proteins that bind and probably mediate the attachment of the 5S RNA into the large ribosomal subunit, where it forms part of the central protuberance. The polypeptide is Large ribosomal subunit protein uL18 (Chlamydia trachomatis serovar A (strain ATCC VR-571B / DSM 19440 / HAR-13)).